The chain runs to 426 residues: Glutamyl-tRNA reductase (426 aa).

Substrate contacts are provided by residues 49–52 (TCNR), Ser109, 114–116 (EGQ), and Gln120. The active-site Nucleophile is Cys50. 189–194 (GAGETG) serves as a coordination point for NADP(+).

The protein belongs to the glutamyl-tRNA reductase family. Homodimer.

It catalyses the reaction (S)-4-amino-5-oxopentanoate + tRNA(Glu) + NADP(+) = L-glutamyl-tRNA(Glu) + NADPH + H(+). It participates in porphyrin-containing compound metabolism; protoporphyrin-IX biosynthesis; 5-aminolevulinate from L-glutamyl-tRNA(Glu): step 1/2. Its pathway is porphyrin-containing compound metabolism; chlorophyll biosynthesis. In terms of biological role, catalyzes the NADPH-dependent reduction of glutamyl-tRNA(Glu) to glutamate 1-semialdehyde (GSA). The polypeptide is Glutamyl-tRNA reductase (Chlorobium chlorochromatii (strain CaD3)).